A 756-amino-acid polypeptide reads, in one-letter code: ATP-dependent DNA helicase Hel308 (756 aa).

ATP-binding positions include glutamine 29 and 47-54; that span reads SATASGKT. Residues 34–201 form the Helicase ATP-binding domain; it reads RAGLLNGENI…WLNAKLVKSD (168 aa). The DEAH box signature appears at 146-149; the sequence is DEIH. Positions 233 to 435 constitute a Helicase C-terminal domain; sequence SLINLTVDTL…PTSLKFHTLS (203 aa).

The protein belongs to the helicase family. Hel308 subfamily. In terms of assembly, monomer.

The catalysed reaction is Couples ATP hydrolysis with the unwinding of duplex DNA by translocating in the 3'-5' direction.. The enzyme catalyses ATP + H2O = ADP + phosphate + H(+). Functionally, DNA-dependent ATPase and 3'-5' DNA helicase that may be involved in repair of stalled replication forks. This Caldivirga maquilingensis (strain ATCC 700844 / DSM 13496 / JCM 10307 / IC-167) protein is ATP-dependent DNA helicase Hel308.